A 122-amino-acid chain; its full sequence is Large ribosomal subunit protein uL14 (122 aa).

It belongs to the universal ribosomal protein uL14 family. As to quaternary structure, part of the 50S ribosomal subunit. Forms a cluster with proteins L3 and L19. In the 70S ribosome, L14 and L19 interact and together make contacts with the 16S rRNA in bridges B5 and B8.

Functionally, binds to 23S rRNA. Forms part of two intersubunit bridges in the 70S ribosome. This chain is Large ribosomal subunit protein uL14, found in Shewanella sediminis (strain HAW-EB3).